Here is a 131-residue protein sequence, read N- to C-terminus: Small ribosomal subunit protein uS8 (131 aa).

It belongs to the universal ribosomal protein uS8 family. As to quaternary structure, part of the 30S ribosomal subunit. Contacts proteins S5 and S12.

Functionally, one of the primary rRNA binding proteins, it binds directly to 16S rRNA central domain where it helps coordinate assembly of the platform of the 30S subunit. This is Small ribosomal subunit protein uS8 from Rhizorhabdus wittichii (strain DSM 6014 / CCUG 31198 / JCM 15750 / NBRC 105917 / EY 4224 / RW1) (Sphingomonas wittichii).